The sequence spans 381 residues: Tafazzin (381 aa).

Residues 1 to 25 (MSFRDVLERGDEFLEAYPRRSPLWR) are Mitochondrial intermembrane-facing. The stretch at 26-47 (FLSYSTSLLTFGVSKLLLFTCY) is an intramembrane region. Residues 48–381 (NVKLNGFEKL…PEGKPKGKDD (334 aa)) are Mitochondrial intermembrane-facing. An HXXXXD motif motif is present at residues 77–82 (HMSMVD). A required for membrane insertion region spans residues 215-232 (LEATKPPIVVPIFATGFE).

It belongs to the taffazin family.

It is found in the mitochondrion outer membrane. The protein localises to the mitochondrion inner membrane. It catalyses the reaction 1'-[1,2-diacyl-sn-glycero-3-phospho],3'-[1-acyl-sn-glycero-3-phospho]-glycerol + a 1,2-diacyl-sn-glycero-3-phosphocholine = a cardiolipin + a 1-acyl-sn-glycero-3-phosphocholine. The catalysed reaction is 1,2-di-(9Z,12Z-octadecadienoyl)-sn-glycero-3-phosphocholine + 1'-[1,2-di-(9Z,12Z-octadecadienoyl)-sn-glycero-3-phospho]-3'-[1-(9Z,12Z-octadecadienoyl)-sn-glycero-3-phospho]-glycerol = 1-(9Z,12Z)-octadecadienoyl-sn-glycero-3-phosphocholine + 1',3'-bis-[1,2-di-(9Z,12Z-octadecadienoyl)-sn-glycero-3-phospho]-glycerol. It carries out the reaction 1'-[1,2-di-(9Z-octadecenoyl)-sn-glycero-3-phospho]-3'-[1-(9Z-octadecenoyl)-2-hexadecanoyl-sn-glycero-3-phospho]-glycerol + 1-hexadecanoyl-sn-glycero-3-phosphocholine = 1'-[1,2-di-(9Z-octadecenoyl)-sn-glycero-3-phospho]-3'-[1-(9Z-octadecenoyl)-sn-glycero-3-phospho]-glycerol + 1,2-dihexadecanoyl-sn-glycero-3-phosphocholine. The enzyme catalyses 1'-[1,2-di-(9Z-octadecenoyl)-sn-glycero-3-phospho]-3'-[1-(9Z-octadecenoyl)-2-(9Z-hexadecenoyl)-sn-glycero-3-phospho]-glycerol + 1-(9Z-hexadecenoyl)-sn-glycero-3-phosphocholine = 1,2-di-(9Z-hexadecenoyl)-sn-glycero-3-phosphocholine + 1'-[1,2-di-(9Z-octadecenoyl)-sn-glycero-3-phospho]-3'-[1-(9Z-octadecenoyl)-sn-glycero-3-phospho]-glycerol. It catalyses the reaction 1',3'-bis[1,2-di-(9Z-octadecenoyl)-sn-glycero-3-phospho]-glycerol + 1-(9Z-octadecenoyl)-sn-glycero-3-phosphocholine = 1'-[1,2-di-(9Z-octadecenoyl)-sn-glycero-3-phospho]-3'-[1-(9Z-octadecenoyl)-sn-glycero-3-phospho]-glycerol + 1,2-di-(9Z-octadecenoyl)-sn-glycero-3-phosphocholine. The catalysed reaction is 1'-[1,2-di-(9Z-octadecenoyl)-sn-glycero-3-phospho]-3'-[1-(9Z-octadecenoyl)-2-(9Z,12Z-octadecadienoyl)-sn-glycero-3-phospho]-glycerol + 1-(9Z,12Z)-octadecadienoyl-sn-glycero-3-phosphocholine = 1,2-di-(9Z,12Z-octadecadienoyl)-sn-glycero-3-phosphocholine + 1'-[1,2-di-(9Z-octadecenoyl)-sn-glycero-3-phospho]-3'-[1-(9Z-octadecenoyl)-sn-glycero-3-phospho]-glycerol. It carries out the reaction 1'-[1,2-di-(9Z-octadecenoyl)-sn-glycero-3-phospho]-3'-[1-(9Z-octadecenoyl)-2-(9Z-hexadecenoyl)-sn-glycero-3-phospho]-glycerol + 1-hexadecanoyl-sn-glycero-3-phosphocholine = 1-hexadecanoyl-2-(9Z-hexadecenoyl)-sn-glycero-3-phosphocholine + 1'-[1,2-di-(9Z-octadecenoyl)-sn-glycero-3-phospho]-3'-[1-(9Z-octadecenoyl)-sn-glycero-3-phospho]-glycerol. The enzyme catalyses 1'-[1,2-di-(9Z-octadecenoyl)-sn-glycero-3-phospho]-3'-[1-(9Z-octadecenoyl)-2-hexadecanoyl-sn-glycero-3-phospho]-glycerol + 1-(9Z-hexadecenoyl)-sn-glycero-3-phosphocholine = 1-(9Z-hexadecenoyl)-2-hexadecanoyl-sn-glycero-3-phosphocholine + 1'-[1,2-di-(9Z-octadecenoyl)-sn-glycero-3-phospho]-3'-[1-(9Z-octadecenoyl)-sn-glycero-3-phospho]-glycerol. It catalyses the reaction 2 1'-[1,2-diacyl-sn-glycero-3-phospho],3'-[1-acyl-sn-glycero-3-phospho]-glycerol = 1',3'-bis-[1-acyl-sn-glycero-3-phospho]-glycerol + a cardiolipin. The catalysed reaction is 2 1'-[1,2-di-(9Z-octadecenoyl)-sn-glycero-3-phospho]-3'-[1-(9Z-octadecenoyl)-sn-glycero-3-phospho]-glycerol = 1',3'-bis-[1-(9Z-octadecenoyl)-sn-glycero-3-phospho]-glycerol + 1',3'-bis[1,2-di-(9Z-octadecenoyl)-sn-glycero-3-phospho]-glycerol. It carries out the reaction 1,2-di-(9Z-hexadecenoyl)-sn-glycero-3-phosphocholine + 1-hexadecanoyl-sn-glycero-3-phosphocholine = 1-hexadecanoyl-2-(9Z-hexadecenoyl)-sn-glycero-3-phosphocholine + 1-(9Z-hexadecenoyl)-sn-glycero-3-phosphocholine. The enzyme catalyses 1'-[1,2-di-(9Z,12Z-octadecadienoyl)-sn-glycero-3-phospho]-3'-[1-(9Z,12Z-octadecadienoyl)-sn-glycero-3-phospho]-glycerol + 1,2-di-(9Z-octadecenoyl)-sn-glycero-3-phosphocholine = 1'-[1,2-di-(9Z,12Z-octadecadienoyl)-sn-glycero-3-phospho]-3'-[1-(9Z,12Z-octadecadienoyl)-2-(9Z-octadecenoyl)-sn-glycero-3-phospho]-glycerol + 1-(9Z-octadecenoyl)-sn-glycero-3-phosphocholine. The protein operates within phospholipid metabolism. Its function is as follows. Acyltransferase required to remodel newly synthesized phospholipid cardiolipin (1',3'-bis-[1,2-diacyl-sn-glycero-3-phospho]-glycerol or CL), a key component of the mitochondrial inner membrane, with tissue specific acyl chains necessary for adequate mitochondrial function. Its role in cellular physiology is to improve mitochondrial performance. CL is critical for the coassembly of lipids and proteins in mitochondrial membranes, for instance, remodeling of the acyl groups of CL in the mitochondrial inner membrane affects the assembly and stability of respiratory chain complex IV and its supercomplex forms. Catalyzes the transacylation between phospholipids and lysophospholipids, with the highest rate being between phosphatidylcholine (1,2-diacyl-sn-glycero-3-phosphocholine or PC) and CL. Catalyzes both 1-acyl-sn-glycero-3-phosphocholine (lysophosphatidylcholine or LPC) reacylation and PC-CL transacylation, that means, it exchanges acyl groups between CL and PC by a combination of forward and reverse transacylations. Also catalyzes transacylations between other phospholipids such as phosphatidylethanolamine (1,2-diacyl-sn-glycero-3-phosphoethanolamine or PE) and CL, between PC and PE, and between PC and phosphatidate (1,2-diacyl-sn-glycero-3-phosphate or PA), although at lower rate. Not regiospecific, it transfers acyl groups into any of the sn-1 and sn-2 positions of the monolysocardiolipin (MLCL), which is an important prerequisite for uniformity and symmetry in CL acyl distribution. Cannot transacylate dilysocardiolipin (DLCL), thus, the role of MLCL is limited to that of an acyl acceptor. CoA-independent, it can reshuffle molecular species within a single phospholipid class. Redistributes fatty acids between MLCL, CL, and other lipids, which prolongs the half-life of CL. Its action is completely reversible, which allows for cyclic changes, such as fission and fusion or bending and flattening of the membrane. Hence, by contributing to the flexibility of the lipid composition, it plays an important role in the dynamics of mitochondria membranes. Essential for the final stage of spermatogenesis, spermatid individualization. Required for the initiation of mitophagy. The sequence is that of Tafazzin (TAZ1) from Saccharomyces cerevisiae (strain ATCC 204508 / S288c) (Baker's yeast).